Here is a 180-residue protein sequence, read N- to C-terminus: ATP-dependent protease subunit HslV (180 aa).

Threonine 7 is an active-site residue. Glycine 165, cysteine 168, and threonine 171 together coordinate Na(+).

The protein belongs to the peptidase T1B family. HslV subfamily. In terms of assembly, a double ring-shaped homohexamer of HslV is capped on each side by a ring-shaped HslU homohexamer. The assembly of the HslU/HslV complex is dependent on binding of ATP.

The protein localises to the cytoplasm. It catalyses the reaction ATP-dependent cleavage of peptide bonds with broad specificity.. Allosterically activated by HslU binding. Its function is as follows. Protease subunit of a proteasome-like degradation complex believed to be a general protein degrading machinery. The polypeptide is ATP-dependent protease subunit HslV (Bacillus cereus (strain ATCC 10987 / NRS 248)).